Here is a 154-residue protein sequence, read N- to C-terminus: Superoxide dismutase [Cu-Zn] (154 aa).

His-47 and His-64 together coordinate Cu cation. A disulfide bridge links Cys-58 with Cys-147. The Zn(2+) site is built by His-64, His-72, His-81, and Asp-84. His-121 serves as a coordination point for Cu cation. Arg-144 is a substrate binding site.

Belongs to the Cu-Zn superoxide dismutase family. In terms of assembly, homodimer. The cofactor is Cu cation. It depends on Zn(2+) as a cofactor.

Its subcellular location is the cytoplasm. The catalysed reaction is 2 superoxide + 2 H(+) = H2O2 + O2. Its function is as follows. Destroys radicals which are normally produced within the cells and which are toxic to biological systems. In Pleurocordyceps sinensis (Polycephalomyces sinensis), this protein is Superoxide dismutase [Cu-Zn] (SOD1).